The sequence spans 296 residues: 4-hydroxybenzoate octaprenyltransferase (296 aa).

Transmembrane regions (helical) follow at residues P28–G48, L52–I72, A102–A122, Y146–A166, G169–Y189, V219–F239, L241–W261, and F275–L295.

The protein belongs to the UbiA prenyltransferase family. Mg(2+) is required as a cofactor.

It localises to the cell inner membrane. The catalysed reaction is all-trans-octaprenyl diphosphate + 4-hydroxybenzoate = 4-hydroxy-3-(all-trans-octaprenyl)benzoate + diphosphate. It functions in the pathway cofactor biosynthesis; ubiquinone biosynthesis. In terms of biological role, catalyzes the prenylation of para-hydroxybenzoate (PHB) with an all-trans polyprenyl group. Mediates the second step in the final reaction sequence of ubiquinone-8 (UQ-8) biosynthesis, which is the condensation of the polyisoprenoid side chain with PHB, generating the first membrane-bound Q intermediate 3-octaprenyl-4-hydroxybenzoate. This chain is 4-hydroxybenzoate octaprenyltransferase, found in Pseudomonas fluorescens (strain Pf0-1).